The sequence spans 974 residues: Short transient receptor potential channel 4 (974 aa).

The Cytoplasmic segment spans residues Met-1 to Arg-324. ANK repeat units follow at residues Leu-29–Lys-60, Arg-71–Asn-93, Val-96–His-118, and Pro-141–Gly-165. The tract at residues Glu-87–His-172 is multimerization domain. His-172, Cys-176, Cys-178, and Cys-181 together coordinate Zn(2+). Residues Leu-223–Arg-260 adopt a coiled-coil conformation. Residues Asp-254–Pro-304 are multimerization domain. An intramembrane region (discontinuously helical) is located at residues His-325 to Ile-359. Topologically, residues Arg-360 to Pro-362 are cytoplasmic. A helical membrane pass occupies residues Phe-363–Ala-383. The Extracellular portion of the chain corresponds to Ser-384 to Glu-403. A helical membrane pass occupies residues Trp-404–Ile-418. Ca(2+) is bound by residues Glu-417, Gln-420, Asn-435, and Asp-438. The Cytoplasmic segment spans residues Lys-419–Asp-432. Residues Trp-433–Ile-453 traverse the membrane as a helical segment. The Extracellular portion of the chain corresponds to Val-454 to Leu-475. A helical membrane pass occupies residues Val-476 to Ala-498. Residues Asn-499–Arg-511 lie on the Cytoplasmic side of the membrane. Residues Met-512–Leu-534 form a helical membrane-spanning segment. The Extracellular segment spans residues Asn-535–Thr-599. Cysteines 549 and 554 form a disulfide. Residues Met-600–Met-620 form a helical membrane-spanning segment. The interaction with ITPR1, ITPR2 and ITPR3 stretch occupies residues Met-615 to Leu-974. The Cytoplasmic portion of the chain corresponds to Asn-621–Leu-974. Residues Ala-765–Arg-787 form a disordered region. Over residues Ser-773–Lys-784 the composition is skewed to basic and acidic residues. Phosphotyrosine; by FYN occurs at positions 956 and 969. A PDZ-binding domain region spans residues Thr-972–Leu-974.

Belongs to the transient receptor (TC 1.A.4) family. STrpC subfamily. TRPC4 sub-subfamily. As to quaternary structure, homotetramer. Heterotetramer with TRPC1 and/or TRPC5. Forms a heteromeric ion channel with TRPC1, with a 1:3 TRPC1:TRPC4 stoichiometry. Interacts with TRPC4AP. Isoform alpha but not isoform beta interacts with ITPR1, ITPR2 and ITPR3. Interacts with NHERF1. Interacts with MX1 and RNF24. Interacts (via CIRB domain) with SESTD1 (via the spectrin 1 repeat) and SPTBN5 (via C-terminus). Interacts with CDH5 and CTNNB1. Interacts (via protein 4.1-binding domain) with EPB41L2. Interacts with PLSCR1. In terms of tissue distribution, abundantly expressed in brain (hippocampal CA1 pyramidal neurons, dentate gyrus granule cells, and cerebral cortical neurons, and in the septal nuclei and the mitral layer of olfactory bulb). Lower levels are detected in other tissues.

It is found in the cell membrane. It catalyses the reaction Ca(2+)(in) = Ca(2+)(out). The catalysed reaction is Na(+)(in) = Na(+)(out). It carries out the reaction Li(+)(in) = Li(+)(out). The enzyme catalyses Cs(+)(in) = Cs(+)(out). With respect to regulation, may be operated by a phosphatidylinositol second messenger system activated by receptor tyrosine kinases or G-protein coupled receptors. May be activated by intracellular calcium store depletion. Functionally, forms a receptor-activated non-selective calcium permeant cation channel. Acts as a cell-cell contact-dependent endothelial calcium entry channel. Forms a homomeric ion channel or a heteromeric ion channel with TRPC1; the heteromeric ion channel has reduced calcium permeability compared to the homomeric channel. Also permeable to monovalent ions including sodium, lithium and cesium ions. The chain is Short transient receptor potential channel 4 (Trpc4) from Mus musculus (Mouse).